A 173-amino-acid chain; its full sequence is Putative pre-16S rRNA nuclease (173 aa).

It belongs to the YqgF nuclease family.

It is found in the cytoplasm. Could be a nuclease involved in processing of the 5'-end of pre-16S rRNA. This is Putative pre-16S rRNA nuclease from Rhodopirellula baltica (strain DSM 10527 / NCIMB 13988 / SH1).